Reading from the N-terminus, the 346-residue chain is Iron uptake protein A2 (346 aa).

Positions 1–31 (MTTKISRRTFFVGGTALTALVVANLPRRASA) form a signal peptide, tat-type signal. Fe cation contacts are provided by histidine 43, tyrosine 44, tyrosine 169, tyrosine 225, and tyrosine 226.

This sequence belongs to the bacterial solute-binding protein 1 family. In terms of processing, predicted to be exported by the Tat system. The position of the signal peptide cleavage has not been experimentally proven.

Its subcellular location is the cellular thylakoid membrane. The protein localises to the periplasm. In terms of biological role, probably part of a periplasmic ABC transporter complex futA1A2BC (TC 3.A.1.10.2) involved in Fe(3+) ion import (ferric iron). This protein and futA1 (slr1295) are subunit proteins that have redundant or overlapping substrate-binding functions. The differing subcellular locations of futA1 (predominantly thylakoid lumen) and futA2 (predominantly periplasmic) suggest they may fulfill different roles. Plays an important role in protecting the acceptor side of photosystem II (PSII) against oxidative damage, especially under iron-limiting growth conditions. Its function is as follows. Plays an undefined role in copper supply to thylakoid proteins. The sequence is that of Iron uptake protein A2 (futA2) from Synechocystis sp. (strain ATCC 27184 / PCC 6803 / Kazusa).